Reading from the N-terminus, the 262-residue chain is Spindlin-1 (262 aa).

The interval 1 to 51 (MKTPFGKTPGQRSRADAGHAGVSANMMKKRTSHKKHRSSVGPSKPVSQPRR) is disordered. Glycyl lysine isopeptide (Lys-Gly) (interchain with G-Cter in SUMO2) cross-links involve residues lysine 7 and lysine 28. A compositionally biased stretch (basic residues) spans 27–38 (MKKRTSHKKHRS). An N6-acetyllysine; alternate modification is found at lysine 44. Lysine 44 participates in a covalent cross-link: Glycyl lysine isopeptide (Lys-Gly) (interchain with G-Cter in SUMO2); alternate. The interval 53 to 116 (IVGCRIQHGW…RVSALEVLPD (64 aa)) is tudor-like domain 1. Residues 93 to 98 (GFDCVY) form a histone H3K4me3 and H3R8me2a binding region. Residues serine 109 and serine 124 each carry the phosphoserine; by AURKA modification. The tract at residues 132-193 (MIGKAVEHMF…DYKEGDLRIM (62 aa)) is tudor-like domain 2. Residue glutamate 142 is a region of interest, histone H3K4me3 and H3R8me2a binding. A Phosphoserine modification is found at serine 199. The segment at 213–262 (LVGKQVEYAKEDGSKRTGMVIHQVEAKPSVYFIKFDDDFHIYVYDLVKTS) is tudor-like domain 3. The segment at 250–252 (DFH) is histone H3K4me3 and H3R8me2a binding.

Belongs to the SPIN/STSY family. Homodimer; may form higher-order oligomers. Interacts with TCF7L2/TCF4; the interaction is direct. Interacts with HABP4 and SERBP1. Interacts with SPINDOC; SPINDOC stabilizes SPIN1 and enhances its association with bivalent H3K4me3K9me3 mark. Interacts with SPOCD1; promoting recruitment of PIWIL4 and SPOCD1 to transposons. Phosphorylated during oocyte meiotic maturation. In terms of tissue distribution, highly expressed in ovarian cancer tissues.

It is found in the nucleus. The protein resides in the nucleolus. Its function is as follows. Chromatin reader that specifically recognizes and binds histone H3 both trimethylated at 'Lys-4' and 'Lys-9' (H3K4me3K9me3) and is involved in piRNA-mediated retrotransposon silencing during spermatogenesis. Plays a key role in the initiation of the PIWIL4-piRNA pathway, a pathway that directs transposon DNA methylation and silencing in the male embryonic germ cells, by promoting recruitment of DNA methylation machinery to transposons: binds young, but not old, LINE1 transposons, which are specifically marked with H3K4me3K9me3, and promotes the recruitment of PIWIL4 and SPOCD1 to transposons, leading to piRNA-directed DNA methylation. Also recognizes and binds histone H3 both trimethylated at 'Lys-4' and asymmetrically dimethylated at 'Arg-8' (H3K4me3 and H3R8me2a) and acts as an activator of Wnt signaling pathway downstream of PRMT2. In case of cancer, promotes cell cancer proliferation via activation of the Wnt signaling pathway. Overexpression induces metaphase arrest and chromosomal instability. Localizes to active rDNA loci and promotes the expression of rRNA genes. May play a role in cell-cycle regulation during the transition from gamete to embryo. Involved in oocyte meiotic resumption, a process that takes place before ovulation to resume meiosis of oocytes blocked in prophase I: may act by regulating maternal transcripts to control meiotic resumption. The sequence is that of Spindlin-1 from Homo sapiens (Human).